The sequence spans 178 residues: uncharacterized protein (178 aa).

Residues 52-177 (HIAIEDRAHQ…RRLPASFLST (126 aa)) enclose the MSP domain.

This is an uncharacterized protein from Caenorhabditis elegans.